The sequence spans 1221 residues: Coatomer subunit alpha (1221 aa).

9 WD repeats span residues T7–K46, E49–T88, G91–E130, G133–T172, G202–F241, G243–M282, R285–V323, P358–V399, and W528–K567. A disordered region spans residues G820 to L885. Low complexity predominate over residues S844–Q857. The stretch at P910–D953 is one WD 10 repeat.

As to quaternary structure, oligomeric complex that consists of at least the alpha, beta, beta', gamma, delta, epsilon and zeta subunits.

Its subcellular location is the cytoplasm. The protein resides in the golgi apparatus membrane. The coatomer is a cytosolic protein complex that binds to dilysine motifs and reversibly associates with Golgi non-clathrin-coated vesicles, which further mediate biosynthetic protein transport from the ER, via the Golgi up to the trans Golgi network. Coatomer complex is required for budding from Golgi membranes, and is essential for the retrograde Golgi-to-ER transport of dilysine-tagged proteins. The polypeptide is Coatomer subunit alpha (copa) (Dictyostelium discoideum (Social amoeba)).